Here is a 1117-residue protein sequence, read N- to C-terminus: MDSKDESSHVWPTSAEHEQNAAQVHFVPDTGTVAQIVYTDDQVRPPQQVVYTADGASYTSVDGPEHTLVYIHPVEAAQTLFTDPGQVAYVQQDATAQQTPLGGLEAKEEEDEDEDEDTEEDEEEDGEDADLDDWEPDPPRPFDPHDLWCEECNNAHSSVCPKHGPLHPIPNRPVLTRARASLPLVLYIDRFLGGVFSKRRIPKRTQLGPVEGPLVRGSELKDCYIHLKVSLDKGDRKDRDLHEDLWFELSDETLCNWMMFVRPAQNHLEQNLVAYQYGHHVYYTTIKNVEPKQELKVWYAASYAEFVNQKIHDISEEERKVLREQEKNWPCYECNRRFISSEQLQQHLNSHDEKLDVFSRTRGRGRGRGKRRFGPGRRPGRPPKFIRLEITSENGEKSDDGTQDLLHFPTKEQFDEAEPATLNGLDQPEQTTIPIPQLPQETQSSLEHEPETHTLHLQPQHEESVVPTQSTLTADDMRRAKRIRNAALQHLFIRKSFRPFKCLQCGKAFREKDKLDQHLRFHGREGNCPLTCDLCNKGFISSASLESHMKLHSDQKTYSCIFCPESFDRLDLLKDHVAIHINDGYFTCPTCKKRFPDFIQVKKHVRSFHSEKIYQCTECDKAFCRPDKLRLHMLRHSDRKDFLCSTCGKQFKRKDKLREHMQRMHNPEREAKKADRISRSKTFKPRITSTDYDSFTFKCRLCMMGFRRRGMLVNHLSKRHPDMKIEEVPELTLPIIKPNRDYFCQYCDKVYKSASKRKAHILKNHPGAELPPSIRKLRPAGPGEPDPMLSTHTQLTGTIATPPVCCPHCSKQYSSKTKMVQHIRKKHPEFAQLSSTIHTPLTTAVISATPAVLTTDSATGETVVTTDLLTQAMTELSQTLTTDYRTPQGDYQRIQYIPVSQSASGLQQPQHIQLQVVQVAPATSPHQSQQSTVDVGQLHDPQPYPQHAIQVQHIQVSGQPLSPSAQQAQQGLSPSHIQGSSSTQGQALQQQQQQQQNSSVQHTYLPSAWNSFRGYSSEIQMMTLPPGQFVITDSGVATPVTTGQVKAVTSGHYVLSESQSDLEEKQTSALSGGVQVQPPAHSDSLDPQTTSQQQTTQYIITTTTNGNGSSEVHITKP.

Residues 97–142 (QQTPLGGLEAKEEEDEDEDEDTEEDEEEDGEDADLDDWEPDPPRPF) are disordered. Over residues 107-136 (KEEEDEDEDEDTEEDEEEDGEDADLDDWEP) the composition is skewed to acidic residues. The region spanning 182-300 (LPLVLYIDRF…PKQELKVWYA (119 aa)) is the SET domain. The tract at residues 201–305 (IPKRTQLGPV…KVWYAASYAE (105 aa)) is N-terminal PR domain; essential for transcriptional activator activity. The C2H2-type 1 zinc finger occupies 329–351 (WPCYECNRRFISSEQLQQHLNSH). A Glycyl lysine isopeptide (Lys-Gly) (interchain with G-Cter in SUMO2) cross-link involves residue lysine 354. Over residues 361–381 (TRGRGRGRGKRRFGPGRRPGR) the composition is skewed to basic residues. The segment at 361–386 (TRGRGRGRGKRRFGPGRRPGRPPKFI) is disordered. Serine 398 carries the post-translational modification Phosphoserine. Residue threonine 402 is modified to Phosphothreonine. Positions 440 to 474 (QETQSSLEHEPETHTLHLQPQHEESVVPTQSTLTA) are disordered. Residues 446–464 (LEHEPETHTLHLQPQHEES) show a composition bias toward basic and acidic residues. C2H2-type zinc fingers lie at residues 500–522 (FKCL…LRFH), 530–552 (LTCD…MKLH), 558–580 (YSCI…VAIH), 586–609 (FTCP…RSFH), 614–636 (YQCT…MLRH), 642–665 (FLCS…QRMH), 697–720 (FKCR…SKRH), 742–765 (YFCQ…LKNH), and 804–827 (VCCP…RKKH). Positions 871-1097 (QAMTELSQTL…QTTSQQQTTQ (227 aa)) are C-terminal glutamine-rich region; essential for transcriptional activator activity. 3 disordered regions span residues 919–943 (VAPA…DPQP), 958–1001 (GQPL…SSVQ), and 1066–1094 (QTSA…SQQQ). The span at 924–934 (SPHQSQQSTVD) shows a compositional bias: polar residues.

Belongs to the class V-like SAM-binding methyltransferase superfamily.

The protein resides in the nucleus. In terms of biological role, transcriptional activator, essential for early embryonic development and survival of embryonic stem cells (ESCs). Supports cell growth and survival during early development by transcriptionally activating the expression of the translation initiation factor EIF3B, to sustain global translation. Activates the transcription of FLNC. This chain is PR domain zinc finger protein 10 (PRDM10), found in Pongo abelii (Sumatran orangutan).